The following is a 517-amino-acid chain: Gamma-1-syntrophin (517 aa).

Positions Thr57 to Lys140 constitute a PDZ domain. The PH domain maps to Gln283–Phe390.

The protein belongs to the syntrophin family. In terms of assembly, isoform 1, but not isoform 2, interacts with the dystrophin protein DMD and related proteins DTNA and DTNB. Interacts with DGKZ. As to expression, brain specific. In CNS, it is expressed in the perikaryon and proximal portion of the neuronal processes. Strong expression in the hippocampus, neuron-rich dendate granule cells, and pyramidal cell layers. Highly expressed in neurons of the cerebral cortex. Also expressed in the cerebellar cortex, deep cerebellar nuclei, thalamus, and basal ganglia. No expression in muscle cells.

It is found in the cytoplasm. It localises to the cytoskeleton. The protein resides in the nucleus. Its function is as follows. Adapter protein that binds to and probably organizes the subcellular localization of a variety of proteins. May link various receptors to the actin cytoskeleton and the dystrophin glycoprotein complex. May participate in regulating the subcellular location of diacylglycerol kinase-zeta to ensure that diacylglycerol is rapidly inactivated following receptor activation. The chain is Gamma-1-syntrophin (SNTG1) from Homo sapiens (Human).